Reading from the N-terminus, the 1384-residue chain is RRP12-like protein (1384 aa).

Residues Met1–Lys13 show a composition bias toward basic residues. Residues Met1–His32 are disordered. The span at Arg19 to Gln29 shows a compositional bias: polar residues. Phosphoserine is present on residues Ser82, Ser85, Ser96, Ser1094, Ser1095, Ser1117, and Ser1119. 3 disordered regions span residues Leu1082 to Gly1102, Leu1114 to Asp1155, and Ser1176 to Lys1384. 2 stretches are compositionally biased toward acidic residues: residues Ala1090–Leu1099 and Leu1114–Ala1127. The segment covering Ser1176 to Gln1191 has biased composition (polar residues). Phosphoserine occurs at positions 1221, 1225, 1227, 1230, 1250, and 1251. Composition is skewed to polar residues over residues Ser1276–Tyr1285 and Thr1297–Pro1315. Residues Gly1321–Lys1334 show a composition bias toward basic and acidic residues. Residues Leu1348–Ser1362 show a composition bias toward basic residues. The segment covering Ala1369 to Arg1378 has biased composition (gly residues).

The protein belongs to the RRP12 family.

Its subcellular location is the nucleus. This Drosophila melanogaster (Fruit fly) protein is RRP12-like protein.